Here is a 321-residue protein sequence, read N- to C-terminus: Chitinase-like protein 1 (321 aa).

The signal sequence occupies residues 1–26; it reads MVTIRSGSIVILVLLAVSFLALVANG. Residues C42 and C55 are joined by a disulfide bond. N57 carries an N-linked (GlcNAc...) asparagine glycan. A disulfide bridge connects residues C157 and C167. Residues N208 and N244 are each glycosylated (N-linked (GlcNAc...) asparagine). A disulfide bond links C267 and C304. Residues 297–321 form a disordered region; the sequence is GPNDELSCAEQKPFNPSTVPSSSSS. Polar residues predominate over residues 310 to 321; that stretch reads FNPSTVPSSSSS.

It belongs to the glycosyl hydrolase 19 family. In terms of tissue distribution, mostly expressed in seedlings shoots and roots, stems, and flowers, and, to a lower extent, in flowers, mature leaves and roots.

It is found in the secreted. Functionally, no chitinase activity. Essential for normal plant growth and development. Regulates cell expansion extent and differentiation at least in roots and hypocotyls. Prevents lignin accumulation in the pith. May modulate ethylene-mediated regulation during development. Probably required to establish thermotolerance acclimation. Plays a role for controlled anisotropic cell expansion in the regulation of waving during root gravitropism and thigmotropism. Involved in the root system architecture adaptation to multiple environmental conditions such as nitrate. Contributes to salt tolerance and possibly to drought by preventing the overaccumulation of sodium ions. The sequence is that of Chitinase-like protein 1 (CTL1) from Arabidopsis thaliana (Mouse-ear cress).